A 199-amino-acid chain; its full sequence is Gamma-glutamylcyclotransferase 2-3 (199 aa).

Residue 5 to 10 (VFGYGS) coordinates substrate. Residue glutamate 86 is the Proton acceptor of the active site.

It belongs to the gamma-glutamylcyclotransferase family. Mn(2+) serves as cofactor.

It is found in the cytoplasm. The enzyme catalyses glutathione = L-cysteinylglycine + 5-oxo-L-proline. Its function is as follows. Converts GSH to 5-oxoproline and cysteine-glycine (Cys-Gly) dipeptide in vitro and plays a significant role in glutathione (GSH) homeostasis. Has no activity towards gamma-glutamyl-L-cysteine but possesses very low activity towards gamma-glutamyl-L-alanine. This is Gamma-glutamylcyclotransferase 2-3 from Arabidopsis thaliana (Mouse-ear cress).